Consider the following 691-residue polypeptide: DNA-directed RNA polymerase subunit beta' (691 aa).

Residues C69, C71, C87, and C90 each coordinate Zn(2+). Positions 489, 491, and 493 each coordinate Mg(2+).

This sequence belongs to the RNA polymerase beta' chain family. RpoC1 subfamily. As to quaternary structure, in plastids the minimal PEP RNA polymerase catalytic core is composed of four subunits: alpha, beta, beta', and beta''. When a (nuclear-encoded) sigma factor is associated with the core the holoenzyme is formed, which can initiate transcription. The cofactor is Mg(2+). It depends on Zn(2+) as a cofactor.

It is found in the plastid. The protein localises to the chloroplast. It catalyses the reaction RNA(n) + a ribonucleoside 5'-triphosphate = RNA(n+1) + diphosphate. Its function is as follows. DNA-dependent RNA polymerase catalyzes the transcription of DNA into RNA using the four ribonucleoside triphosphates as substrates. This is DNA-directed RNA polymerase subunit beta' from Jasminum nudiflorum (Winter jasmine).